The primary structure comprises 375 residues: UDP-N-acetylglucosamine--N-acetylmuramyl-(pentapeptide) pyrophosphoryl-undecaprenol N-acetylglucosamine transferase (375 aa).

UDP-N-acetyl-alpha-D-glucosamine-binding positions include 15–17 (TGG), Asn126, Arg169, Ser197, and Gln298.

Belongs to the glycosyltransferase 28 family. MurG subfamily.

Its subcellular location is the cell inner membrane. It carries out the reaction di-trans,octa-cis-undecaprenyl diphospho-N-acetyl-alpha-D-muramoyl-L-alanyl-D-glutamyl-meso-2,6-diaminopimeloyl-D-alanyl-D-alanine + UDP-N-acetyl-alpha-D-glucosamine = di-trans,octa-cis-undecaprenyl diphospho-[N-acetyl-alpha-D-glucosaminyl-(1-&gt;4)]-N-acetyl-alpha-D-muramoyl-L-alanyl-D-glutamyl-meso-2,6-diaminopimeloyl-D-alanyl-D-alanine + UDP + H(+). It participates in cell wall biogenesis; peptidoglycan biosynthesis. In terms of biological role, cell wall formation. Catalyzes the transfer of a GlcNAc subunit on undecaprenyl-pyrophosphoryl-MurNAc-pentapeptide (lipid intermediate I) to form undecaprenyl-pyrophosphoryl-MurNAc-(pentapeptide)GlcNAc (lipid intermediate II). This is UDP-N-acetylglucosamine--N-acetylmuramyl-(pentapeptide) pyrophosphoryl-undecaprenol N-acetylglucosamine transferase from Rhodopseudomonas palustris (strain BisB18).